A 407-amino-acid polypeptide reads, in one-letter code: Argininosuccinate synthase (407 aa).

Residues 11–19 (AYSGGLDTS) and alanine 38 contribute to the ATP site. Tyrosine 91 and serine 96 together coordinate L-citrulline. Residue glycine 121 participates in ATP binding. L-aspartate contacts are provided by threonine 123, asparagine 127, and aspartate 128. An L-citrulline-binding site is contributed by asparagine 127. Positions 131, 181, 190, 266, and 278 each coordinate L-citrulline.

The protein belongs to the argininosuccinate synthase family. Type 1 subfamily. As to quaternary structure, homotetramer.

It localises to the cytoplasm. It catalyses the reaction L-citrulline + L-aspartate + ATP = 2-(N(omega)-L-arginino)succinate + AMP + diphosphate + H(+). It functions in the pathway amino-acid biosynthesis; L-arginine biosynthesis; L-arginine from L-ornithine and carbamoyl phosphate: step 2/3. In Campylobacter concisus (strain 13826), this protein is Argininosuccinate synthase.